A 144-amino-acid chain; its full sequence is 3-hydroxyacyl-[acyl-carrier-protein] dehydratase FabZ (144 aa).

His48 is a catalytic residue.

Belongs to the thioester dehydratase family. FabZ subfamily.

Its subcellular location is the cytoplasm. The catalysed reaction is a (3R)-hydroxyacyl-[ACP] = a (2E)-enoyl-[ACP] + H2O. In terms of biological role, involved in unsaturated fatty acids biosynthesis. Catalyzes the dehydration of short chain beta-hydroxyacyl-ACPs and long chain saturated and unsaturated beta-hydroxyacyl-ACPs. This chain is 3-hydroxyacyl-[acyl-carrier-protein] dehydratase FabZ, found in Bacillus cytotoxicus (strain DSM 22905 / CIP 110041 / 391-98 / NVH 391-98).